Here is a 287-residue protein sequence, read N- to C-terminus: Ventral anterior homeobox 1b (287 aa).

Over residues 1-33 (MFEKTRDMDVRCNIEENGRISKPKDNKEIRESQ) the composition is skewed to basic and acidic residues. Positions 1–55 (MFEKTRDMDVRCNIEENGRISKPKDNKEIRESQSKMPSTYPAPGSSEGCAKNKSS) are disordered. The segment at residues 89 to 148 (PKRTRTSFTAEQLYRLEMEFQRCQYVVGRERTELARQLNLSETQVKVWFQNRRTKQKKDQ) is a DNA-binding region (homeobox).

The protein belongs to the EMX homeobox family.

It localises to the nucleus. In terms of biological role, involved in ventral eye development. This chain is Ventral anterior homeobox 1b (vax1-b), found in Xenopus laevis (African clawed frog).